Reading from the N-terminus, the 58-residue chain is Large ribosomal subunit protein eL37 (58 aa).

Residues Cys20, Cys23, Cys35, and Cys38 each coordinate Zn(2+). The segment at 20–38 (CRRCGEKSYHVKKERCSSC) adopts a C4-type zinc-finger fold. The disordered stretch occupies residues 39–58 (GFGDSASRRGYAWQSKSGDN).

Belongs to the eukaryotic ribosomal protein eL37 family. Requires Zn(2+) as cofactor.

Its function is as follows. Binds to the 23S rRNA. In Halorubrum lacusprofundi (strain ATCC 49239 / DSM 5036 / JCM 8891 / ACAM 34), this protein is Large ribosomal subunit protein eL37.